Here is a 442-residue protein sequence, read N- to C-terminus: MPLPCDTILQAALIVTQDDARTVIEDGAIAIHEGRIAAVGQRDAIVGNWHGVTVIDMGESLIMPGLVNAHTHASMTLLRGLADDLPLMDWLTGHIFPVEKGLTGELVELGALLGCAEMLRTGTTAFSDMYLIEDATLRAVDRAGLRCLAGEAIFAFPSPAYADPETAFDLVRAQHDRWKHHARAALAVAPHAVYTSTPAILARCRDLAEELGLPIHLHLAETATETAQCIEQHGARPVPYCDGLGLLTPRTTLAHCVDLTEGEIDLLAERGVTVAHCPESNMKLASGIAPATAMLGRGMTLGLGTDGAASNNSLNMFTEMTSCALLHKVHHMDPTCAPASAVLDMATRGGAHALHMQGIGRIEAGCPADIIALDLRAPNMQPIFNPASHLVYAATGHETRLTMVGGEVLYLDGCYTRFDMDDLLKEVRKARTWAMEQVRAAR.

His70 and His72 together coordinate Zn(2+). Substrate is bound by residues Glu99 and His191. His218 is a binding site for Zn(2+). Positions 221 and 306 each coordinate substrate. Residue Asp306 participates in Zn(2+) binding.

Belongs to the metallo-dependent hydrolases superfamily. MTA/SAH deaminase family. Zn(2+) is required as a cofactor.

It catalyses the reaction S-adenosyl-L-homocysteine + H2O + H(+) = S-inosyl-L-homocysteine + NH4(+). It carries out the reaction S-methyl-5'-thioadenosine + H2O + H(+) = S-methyl-5'-thioinosine + NH4(+). Catalyzes the deamination of 5-methylthioadenosine and S-adenosyl-L-homocysteine into 5-methylthioinosine and S-inosyl-L-homocysteine, respectively. Is also able to deaminate adenosine. The chain is 5-methylthioadenosine/S-adenosylhomocysteine deaminase from Nitratidesulfovibrio vulgaris (strain ATCC 29579 / DSM 644 / CCUG 34227 / NCIMB 8303 / VKM B-1760 / Hildenborough) (Desulfovibrio vulgaris).